We begin with the raw amino-acid sequence, 360 residues long: Glutamine synthetase (360 aa).

The GS beta-grasp domain occupies 26–105; it reads IMAEYIWIDA…VLSECWNADG (80 aa). The GS catalytic domain maps to 112 to 360; that stretch reads YRHECAKLME…METIYGSVDN (249 aa).

The protein belongs to the glutamine synthetase family. In terms of assembly, homooctamer.

Its subcellular location is the cytoplasm. It catalyses the reaction L-glutamate + NH4(+) + ATP = L-glutamine + ADP + phosphate + H(+). The chain is Glutamine synthetase (GLN1) from Colletotrichum gloeosporioides (Anthracnose fungus).